The chain runs to 641 residues: NADH-ubiquinone oxidoreductase chain 5 (641 aa).

17 consecutive transmembrane segments (helical) span residues 1–21, 33–53, 59–79, 83–103, 121–141, 175–195, 211–231, 243–263, 276–296, 303–322, 367–387, 405–425, 453–473, 476–496, 512–532, 564–584, and 621–641; these read MYLT…VIGR, SLSI…IVLL, ITIY…WAFY, ISIT…LYSI, LFTF…MFVG, VGDL…GSSD, ITIV…QLGL, TPVS…YLIL, LICV…TGLF, VIAY…LGLS, ILPF…ALPF, FLVT…ITAF, PLIM…IGYI, KHLS…VGTL, FGVQ…ALIV, WFDN…GGIF, and IPHY…SIFI.

This sequence belongs to the complex I subunit 5 family.

Its subcellular location is the mitochondrion inner membrane. It carries out the reaction a ubiquinone + NADH + 5 H(+)(in) = a ubiquinol + NAD(+) + 4 H(+)(out). Functionally, core subunit of the mitochondrial membrane respiratory chain NADH dehydrogenase (Complex I) that is believed to belong to the minimal assembly required for catalysis. Complex I functions in the transfer of electrons from NADH to the respiratory chain. The immediate electron acceptor for the enzyme is believed to be ubiquinone. In Allomyces macrogynus, this protein is NADH-ubiquinone oxidoreductase chain 5 (ND5).